A 182-amino-acid chain; its full sequence is dCTP deaminase, dUMP-forming (182 aa).

Residues 96-101 (RSSIGR), Asp113, 121-123 (TLE), Gln142, Tyr156, and Gln163 each bind dCTP. Glu123 acts as the Proton donor/acceptor in catalysis.

The protein belongs to the dCTP deaminase family. Homotrimer.

The catalysed reaction is dCTP + 2 H2O = dUMP + NH4(+) + diphosphate. It functions in the pathway pyrimidine metabolism; dUMP biosynthesis; dUMP from dCTP: step 1/1. Functionally, bifunctional enzyme that catalyzes both the deamination of dCTP to dUTP and the hydrolysis of dUTP to dUMP without releasing the toxic dUTP intermediate. The sequence is that of dCTP deaminase, dUMP-forming from Halothermothrix orenii (strain H 168 / OCM 544 / DSM 9562).